We begin with the raw amino-acid sequence, 406 residues long: Ubiquitin-like modifier-activating enzyme 5 (406 aa).

ATP contacts are provided by Gly82, Asp103, Lys126, Asn149, and Asn183. Zn(2+) contacts are provided by Cys225 and Cys228. The Glycyl thioester intermediate role is filled by Cys249. The Zn(2+) site is built by Cys302 and Cys307. The tract at residues 373–397 (EAPSKSTETTSEATTTTTGDETSLD) is disordered. A compositionally biased stretch (low complexity) spans 378 to 393 (STETTSEATTTTTGDE).

It belongs to the ubiquitin-activating E1 family. UBA5 subfamily.

Functionally, E1-like enzyme which activates UFM1. In Drosophila willistoni (Fruit fly), this protein is Ubiquitin-like modifier-activating enzyme 5.